The following is a 214-amino-acid chain: ATP-dependent Clp protease proteolytic subunit (214 aa).

Catalysis depends on S114, which acts as the Nucleophile. H139 is an active-site residue.

It belongs to the peptidase S14 family. As to quaternary structure, fourteen ClpP subunits assemble into 2 heptameric rings which stack back to back to give a disk-like structure with a central cavity, resembling the structure of eukaryotic proteasomes.

It localises to the cytoplasm. It catalyses the reaction Hydrolysis of proteins to small peptides in the presence of ATP and magnesium. alpha-casein is the usual test substrate. In the absence of ATP, only oligopeptides shorter than five residues are hydrolyzed (such as succinyl-Leu-Tyr-|-NHMec, and Leu-Tyr-Leu-|-Tyr-Trp, in which cleavage of the -Tyr-|-Leu- and -Tyr-|-Trp bonds also occurs).. Its function is as follows. Cleaves peptides in various proteins in a process that requires ATP hydrolysis. Has a chymotrypsin-like activity. Plays a major role in the degradation of misfolded proteins. This is ATP-dependent Clp protease proteolytic subunit from Nitrosomonas eutropha (strain DSM 101675 / C91 / Nm57).